A 722-amino-acid chain; its full sequence is MPRRRGTPLPTILLLLAFVGGACGTEILSKSRLESCSHDSDAGGRLKCDRKLVVDLAVPSGASGGEASLVARVAGVEEENDTPSATKSIRDPPVITVSKSATYALYALTYLDRDVAYRPDEKYVKTHKCEPYAGAKVVGECERLWDEKGNVIKQTEPICCPCGPHRVQSKCGDIWSKLTKGKANTAHCVRFPGDWFHVFGIGAWSLRFSIRVQVKKGSSVWDVVVGPENKTVVSGDNFLRVKVVGDYTGYTSIPSFEDNYLVTPRKGTGSSQPQDLGNEHSKWMILDRVRFTLDGLECDKIGVGYEAYRNQPNFCSAPYGSCLGNQLWNFWEYDKRRIDNSQLPLYIVEGRFQRINQHPNAGAHTFSVGVTEDLNTNLLIELMADDIEYVYQRSPAKIIDIRVPTFEALSQVGIANVTTKNIGKLESSYSLTFKCSSGISPVEEQLYTMKPDEVIARSFELRSTTDQAAMHQCEAILKASDFSELDREGYRFSTAATVYNNGAQIGPTNDHKKGGFWDSIKALWRNLIDFLTGRLCWTKCPRLFDFGCHIQYVCIGWILLLLLIPAAVVFLWLLHQEGLFDPLYDWWGLEPDDDYRARRRHQKGRHHRHHHDHRHRHGHSHGDHHHHYHGGHHQRRRHHHPPAWDVEGHHHDRQQHSHEAGRNHHRGYGEVVAAGAAPLRLDRASRPGQTEVDAVVEYRERRSRHERHGGHGHRDGHYSPSV.

The first 24 residues, 1–24 (MPRRRGTPLPTILLLLAFVGGACG), serve as a signal peptide directing secretion. Residues 25–552 (TEILSKSRLE…LFDFGCHIQY (528 aa)) lie on the Extracellular side of the membrane. 7 cysteine pairs are disulfide-bonded: Cys36-Cys48, Cys129-Cys159, Cys141-Cys188, Cys160-Cys315, Cys162-Cys171, Cys298-Cys322, and Cys435-Cys473. A helical transmembrane segment spans residues 553–573 (VCIGWILLLLLIPAAVVFLWL). Residues 574-722 (LHQEGLFDPL…HRDGHYSPSV (149 aa)) are Cytoplasmic-facing. Over residues 598–641 (RRRHQKGRHHRHHHDHRHRHGHSHGDHHHHYHGGHHQRRRHHHP) the composition is skewed to basic residues. Disordered regions lie at residues 598-665 (RRRH…RNHH) and 680-722 (RLDR…SPSV). A compositionally biased stretch (basic and acidic residues) spans 646 to 662 (VEGHHHDRQQHSHEAGR). The segment covering 701–711 (RRSRHERHGGH) has biased composition (basic residues). Residues 712–722 (GHRDGHYSPSV) show a composition bias toward basic and acidic residues.

This sequence belongs to the HAP2/GCS1 family.

Its subcellular location is the endoplasmic reticulum membrane. The protein resides in the cell membrane. Its function is as follows. Required for male fertility. Plays a role in pollen tube guidance and successful gamete attachment. Essential for the fusion of gametes during double fertilization, where one male gamete fuses with the egg to produce a zygote, and another male gamete fuses with the central cell to produce the endosperm. Mediates the fusion of cell membranes. Not required for pollen tube outgrowth. This chain is Protein HAPLESS 2-A (HAP2A), found in Oryza sativa subsp. japonica (Rice).